The chain runs to 271 residues: Phosphatidylinositol transfer protein alpha isoform (271 aa).

Residues Thr-59, Lys-61, Glu-86, Asn-90, Thr-97, and Lys-195 each coordinate a 1,2-diacyl-sn-glycero-3-phospho-(1D-myo-inositol). The residue at position 216 (Lys-216) is an N6-acetyllysine. Basic and acidic residues predominate over residues Thr-251–Val-264. The interval Thr-251–Asp-271 is disordered.

The protein belongs to the PtdIns transfer protein family. PI transfer class I subfamily. In terms of processing, phosphorylated by PKC in a calcium and phosphatidylserine-dependent manner. Expressed in a wide range of tissues.

Its subcellular location is the cytoplasm. The protein resides in the nucleus. The enzyme catalyses a 1,2-diacyl-sn-glycero-3-phosphocholine(in) = a 1,2-diacyl-sn-glycero-3-phosphocholine(out). It catalyses the reaction a 1,2-diacyl-sn-glycero-3-phospho-(1D-myo-inositol)(in) = a 1,2-diacyl-sn-glycero-3-phospho-(1D-myo-inositol)(out). Phosphatidylinositol transfer activity is inhibited by N-ethylmaleimide. In terms of biological role, catalyzes the transfer of phosphatidylinositol (PI) and phosphatidylcholine (PC) between membranes. Shows a preference for PI and PC containing shorter saturated or monosaturated acyl chains at the sn-1 and sn-2 positions. Preference order for PC is C16:1 &gt; C16:0 &gt; C18:1 &gt; C18:0 &gt; C20:4 and for PI is C16:1 &gt; C16:0 &gt; C18:1 &gt; C18:0 &gt; C20:4 &gt; C20:3. This chain is Phosphatidylinositol transfer protein alpha isoform (Pitpna), found in Rattus norvegicus (Rat).